Here is a 166-residue protein sequence, read N- to C-terminus: Regulator of ribonuclease activity A (166 aa).

It belongs to the RraA family. Homotrimer. Binds to both RNA-binding sites in the C-terminal region of Rne and to RhlB.

It is found in the cytoplasm. In terms of biological role, globally modulates RNA abundance by binding to RNase E (Rne) and regulating its endonucleolytic activity. Can modulate Rne action in a substrate-dependent manner by altering the composition of the degradosome. Modulates RNA-binding and helicase activities of the degradosome. This Actinobacillus succinogenes (strain ATCC 55618 / DSM 22257 / CCUG 43843 / 130Z) protein is Regulator of ribonuclease activity A.